The following is an 88-amino-acid chain: MGTARFLRAVLLLSVLLMVTFPALLSAEHHDGRVDICRLPSDSGDCLRFFEMWYFDGTTCTKFVYGGYGGNDNRFPTEKACVKRCAKA.

A signal peptide spans 1–27; the sequence is MGTARFLRAVLLLSVLLMVTFPALLSA. Residues 28-33 constitute a propeptide that is removed on maturation; it reads EHHDGR. Residues 37-85 enclose the BPTI/Kunitz inhibitor domain; the sequence is CRLPSDSGDCLRFFEMWYFDGTTCTKFVYGGYGGNDNRFPTEKACVKRC. 2 disulfides stabilise this stretch: Cys37/Cys85 and Cys60/Cys81.

This sequence belongs to the venom Kunitz-type family. 03 (sub-Kunitz) subfamily. In terms of tissue distribution, expressed by the venom gland.

The protein localises to the secreted. Functionally, serine protease inhibitor that inhibits trypsin at a molar ratio of 1:1. This chain is Kunitz-type U15-theraphotoxin-Hhn1b, found in Cyriopagopus hainanus (Chinese bird spider).